The following is a 331-amino-acid chain: Ferredoxin--NADP reductase 2 (331 aa).

7 residues coordinate FAD: Glu-37, Gln-45, Tyr-50, Val-90, Phe-124, Asp-286, and Thr-327.

The protein belongs to the ferredoxin--NADP reductase type 2 family. As to quaternary structure, homodimer. FAD is required as a cofactor.

It catalyses the reaction 2 reduced [2Fe-2S]-[ferredoxin] + NADP(+) + H(+) = 2 oxidized [2Fe-2S]-[ferredoxin] + NADPH. This Listeria monocytogenes serovar 1/2a (strain ATCC BAA-679 / EGD-e) protein is Ferredoxin--NADP reductase 2.